The primary structure comprises 636 residues: DNA gyrase subunit B (636 aa).

Residues 421 to 535 enclose the Toprim domain; it reads TELFIVEGDS…QGRVYIALPP (115 aa). Mg(2+) is bound by residues Glu427, Asp500, and Asp502.

Belongs to the type II topoisomerase GyrB family. Heterotetramer, composed of two GyrA and two GyrB chains. In the heterotetramer, GyrA contains the active site tyrosine that forms a transient covalent intermediate with DNA, while GyrB binds cofactors and catalyzes ATP hydrolysis. The cofactor is Mg(2+). Mn(2+) serves as cofactor. It depends on Ca(2+) as a cofactor.

The protein localises to the cytoplasm. It carries out the reaction ATP-dependent breakage, passage and rejoining of double-stranded DNA.. Its function is as follows. A type II topoisomerase that negatively supercoils closed circular double-stranded (ds) DNA in an ATP-dependent manner to modulate DNA topology and maintain chromosomes in an underwound state. Negative supercoiling favors strand separation, and DNA replication, transcription, recombination and repair, all of which involve strand separation. Also able to catalyze the interconversion of other topological isomers of dsDNA rings, including catenanes and knotted rings. Type II topoisomerases break and join 2 DNA strands simultaneously in an ATP-dependent manner. This is DNA gyrase subunit B from Thermotoga maritima (strain ATCC 43589 / DSM 3109 / JCM 10099 / NBRC 100826 / MSB8).